An 857-amino-acid chain; its full sequence is MKGARNIYHHSYMSFLLVFVVMILIHPALSIYINTLSSTESLTISSNKTLVSPGSIFEVGFFRTNSRWYLGMWYKKVSDRTYVWVANRDNPLSNAIGTLKISGNNLVLLDHSNKPVWWTNLTRGNERSPVVAELLANGNFVMRDSSNNDASEYLWQSFDYPTDTLLPEMKLGYNLKTGLNRFLTSWRSSDDPSSGNFSYKLETQSLPEFYLSRENFPMHRSGPWNGIRFSGIPEDQKLSYMVYNFIENNEEVAYTFRMTNNSFYSRLTLISEGYFQRLTWYPSIRIWNRFWSSPVDPQCDTYIMCGPYAYCDVNTSPVCNCIQGFNPRNIQQWDQRVWAGGCIRRTQLSCSGDGFTRMKKMKLPETTMATVDRSIGVKECKKRCISDCNCTAFANADIRNGGSGCVIWTERLEDIRNYATDAIDGQDLYVRLAAADIAKKRNASGKIISLTVGVSVLLLLIMFCLWKRKQKRAKASAISIANTQRNQNLPMNEMVLSSKREFSGEYKFEELELPLIEMETVVKATENFSSCNKLGQGGFGIVYKGRLLDGKEIAVKRLSKTSVQGTDEFMNEVTLIARLQHINLVQVLGCCIEGDEKMLIYEYLENLSLDSYLFGKTRRSKLNWNERFDITNGVARGLLYLHQDSRFRIIHRDLKVSNILLDKNMIPKISDFGMARIFERDETEANTMKVVGTYGYMSPEYAMYGIFSEKSDVFSFGVIVLEIVSGKKNRGFYNLDYENDLLSYVWSRWKEGRALEIVDPVIVDSLSSQPSIFQPQEVLKCIQIGLLCVQELAEHRPAMSSVVWMFGSEATEIPQPKPPGYCVRRSPYELDPSSSWQCDENESWTVNQYTCSVIDAR.

The first 32 residues, 1 to 32 (MKGARNIYHHSYMSFLLVFVVMILIHPALSIY), serve as a signal peptide directing secretion. Over 33–446 (INTLSSTESL…IAKKRNASGK (414 aa)) the chain is Extracellular. The 121-residue stretch at 35-155 (TLSSTESLTI…SNNDASEYLW (121 aa)) folds into the Bulb-type lectin domain. N-linked (GlcNAc...) asparagine glycans are attached at residues Asn-47, Asn-120, Asn-196, Asn-260, Asn-389, and Asn-442. Positions 350–433 (CSGDGFTRMK…DGQDLYVRLA (84 aa)) constitute a PAN domain. Intrachain disulfides connect Cys-380-Cys-405 and Cys-388-Cys-390. A helical transmembrane segment spans residues 447–466 (IISLTVGVSVLLLLIMFCLW). Residues 467–857 (KRKQKRAKAS…QYTCSVIDAR (391 aa)) lie on the Cytoplasmic side of the membrane. The region spanning 528 to 779 (FSSCNKLGQG…PSIFQPQEVL (252 aa)) is the Protein kinase domain. Residues 534–542 (LGQGGFGIV) and Lys-556 contribute to the ATP site. The active-site Proton acceptor is the Asp-653.

This sequence belongs to the protein kinase superfamily. Ser/Thr protein kinase family. Predominantly in the pistil and anther.

Its subcellular location is the membrane. It catalyses the reaction L-seryl-[protein] + ATP = O-phospho-L-seryl-[protein] + ADP + H(+). It carries out the reaction L-threonyl-[protein] + ATP = O-phospho-L-threonyl-[protein] + ADP + H(+). Its function is as follows. Involved in sporophytic self-incompatibility system (the inability of flowering plants to achieve self-fertilization), probably acting in combination with S-locus-specific glycoproteins. Interaction with a ligand in the extracellular domain triggers the protein kinase activity of the cytoplasmic domain. The polypeptide is Putative serine/threonine-protein kinase receptor (SRK6) (Brassica oleracea var. viridis (Flowering kale)).